The sequence spans 392 residues: Phosphoglycerate kinase (392 aa).

Substrate contacts are provided by residues 21–23, Arg-36, 59–62, Arg-113, and Arg-146; these read DLN and HLGR. ATP contacts are provided by residues Lys-197, Glu-319, and 345-348; that span reads GGDT.

It belongs to the phosphoglycerate kinase family. Monomer.

Its subcellular location is the cytoplasm. It carries out the reaction (2R)-3-phosphoglycerate + ATP = (2R)-3-phospho-glyceroyl phosphate + ADP. It participates in carbohydrate degradation; glycolysis; pyruvate from D-glyceraldehyde 3-phosphate: step 2/5. This is Phosphoglycerate kinase from Nitrosococcus oceani (strain ATCC 19707 / BCRC 17464 / JCM 30415 / NCIMB 11848 / C-107).